A 2193-amino-acid polypeptide reads, in one-letter code: Genome polyprotein (2193 aa).

The disordered stretch occupies residues 1–23; it reads MGSQVSTQRSGSHENSNSASEGS. The N-myristoyl glycine; by host moiety is linked to residue G2. Residues 2-1503 lie on the Cytoplasmic side of the membrane; the sequence is GSQVSTQRSG…HLNRAVLVMQ (1502 aa). The interval 566–588 is amphipathic alpha-helix; that stretch reads GDPIADMIDQTVNNQVNRSLTAL. Residues H883 and D901 each act as for protease 2A activity in the active site. Positions 918 and 920 each coordinate Zn(2+). C972 functions as the For protease 2A activity in the catalytic mechanism. Zn(2+) is bound by residues C978 and H980. Residues 1112–1184 are membrane-binding; that stretch reads SASWLKKFND…EQSAASQEDL (73 aa). The tract at residues 1112–1250 is oligomerization; the sequence is SASWLKKFND…SPGTGKSLAT (139 aa). Positions 1133-1137 are RNA-binding; that stretch reads SSKIS. The SF3 helicase domain maps to 1216–1374; it reads EKRMNNYMQF…YKTDLGRLDA (159 aa). ATP is bound at residue 1240–1247; sequence GSPGTGKS. The Zn(2+) site is built by C1381, C1392, and C1397. The C4-type; degenerate zinc-finger motif lies at 1381-1397; sequence CTENNTANFKRCSPLVC. The interval 1424–1431 is RNA-binding; sequence EYNNRSAI. The tract at residues 1435–1440 is oligomerization; it reads IEALFQ. The stretch at 1504–1519 is an intramembrane region; it reads SIATVVAVVSLVYVIY. Residues 1520–2193 are Cytoplasmic-facing; it reads KLFAGFQGAY…NLRRNWLELF (674 aa). Y1529 bears the O-(5'-phospho-RNA)-tyrosine mark. Residues 1549–1727 form the Peptidase C3 domain; that stretch reads GPSLDFALSL…FCAGLKRGYF (179 aa). Residues H1588, E1619, and C1695 each act as for protease 3C activity in the active site. The RdRp catalytic domain occupies 1958-2074; it reads GSLFAFDYSG…SYPFPIDCSE (117 aa). The Mg(2+) site is built by D1964 and D2060.

Belongs to the picornaviruses polyprotein family. Interacts with capsid protein VP1 and capsid protein VP3 to form heterotrimeric protomers. As to quaternary structure, interacts with capsid protein VP0, and capsid protein VP3 to form heterotrimeric protomers. Five protomers subsequently associate to form pentamers which serve as building blocks for the capsid. Interacts with capsid protein VP2, capsid protein VP3 and capsid protein VP4 following cleavage of capsid protein VP0. In terms of assembly, interacts with capsid protein VP1 and capsid protein VP3 in the mature capsid. Interacts with capsid protein VP0 and capsid protein VP1 to form heterotrimeric protomers. Five protomers subsequently associate to form pentamers which serve as building blocks for the capsid. Interacts with capsid protein VP4 in the mature capsid. Interacts with protein 2C; this interaction may be important for virion morphogenesis. As to quaternary structure, interacts with capsid protein VP1 and capsid protein VP3. In terms of assembly, homodimer. Homohexamer; forms a hexameric ring structure with 6-fold symmetry characteristic of AAA+ ATPases. Interacts (via N-terminus) with host RTN3 (via reticulon domain); this interaction is important for viral replication. Interacts with capsid protein VP3; this interaction may be important for virion morphogenesis. As to quaternary structure, interacts with protein 3CD. In terms of assembly, homodimer. Interacts with host GBF1. Interacts (via GOLD domain) with host ACBD3 (via GOLD domain); this interaction allows the formation of a viral protein 3A/ACBD3 heterotetramer with a 2:2 stoichiometry, which will stimulate the recruitment of host PI4KB in order to synthesize PI4P at the viral RNA replication sites. Interacts with RNA-directed RNA polymerase. As to quaternary structure, interacts with host IFIH1/MDA5; this interaction inhibits host IFIH1. In terms of assembly, protein 3CD: Interacts with protein 3AB and with RNA-directed RNA polymerase. Interacts with Viral protein genome-linked and with protein 3CD. Mg(2+) serves as cofactor. Post-translationally, specific enzymatic cleavages in vivo by the viral proteases yield processing intermediates and the mature proteins. In terms of processing, myristoylation is required for the formation of pentamers during virus assembly. Further assembly of 12 pentamers and a molecule of genomic RNA generates the provirion. During virion maturation, immature virions are rendered infectious following cleavage of VP0 into VP4 and VP2. This maturation seems to be an autocatalytic event triggered by the presence of RNA in the capsid and it is followed by a conformational change infectious virion. Post-translationally, myristoylation is required during RNA encapsidation and formation of the mature virus particle. In terms of processing, VPg is uridylylated by the polymerase into VPg-pUpU. This acts as a nucleotide-peptide primer for the genomic RNA replication.

It localises to the virion. The protein resides in the host cytoplasm. The protein localises to the host cytoplasmic vesicle membrane. It is found in the host nucleus. It carries out the reaction a ribonucleoside 5'-triphosphate + H2O = a ribonucleoside 5'-diphosphate + phosphate + H(+). The enzyme catalyses Selective cleavage of Tyr-|-Gly bond in the picornavirus polyprotein.. The catalysed reaction is RNA(n) + a ribonucleoside 5'-triphosphate = RNA(n+1) + diphosphate. It catalyses the reaction Selective cleavage of Gln-|-Gly bond in the poliovirus polyprotein. In other picornavirus reactions Glu may be substituted for Gln, and Ser or Thr for Gly.. With respect to regulation, replication or transcription is subject to high level of random mutations by the nucleotide analog ribavirin. Functionally, forms an icosahedral capsid of pseudo T=3 symmetry with capsid proteins VP2 and VP3. The capsid is 300 Angstroms in diameter, composed of 60 copies of each capsid protein and enclosing the viral positive strand RNA genome. Capsid protein VP1 mainly forms the vertices of the capsid. Capsid protein VP1 interacts with host cell receptor to provide virion attachment to target host cells. This attachment induces virion internalization. After binding to its receptor, the capsid undergoes conformational changes. Capsid protein VP1 N-terminus (that contains an amphipathic alpha-helix) and capsid protein VP4 are externalized. Together, they shape a pore in the host membrane through which viral genome is translocated to host cell cytoplasm. In terms of biological role, forms an icosahedral capsid of pseudo T=3 symmetry with capsid proteins VP2 and VP3. The capsid is 300 Angstroms in diameter, composed of 60 copies of each capsid protein and enclosing the viral positive strand RNA genome. Its function is as follows. Lies on the inner surface of the capsid shell. After binding to the host receptor, the capsid undergoes conformational changes. Capsid protein VP4 is released, Capsid protein VP1 N-terminus is externalized, and together, they shape a pore in the host membrane through which the viral genome is translocated into the host cell cytoplasm. Component of immature procapsids, which is cleaved into capsid proteins VP4 and VP2 after maturation. Allows the capsid to remain inactive before the maturation step. Functionally, cysteine protease that cleaves viral polyprotein and specific host proteins. It is responsible for the autocatalytic cleavage between the P1 and P2 regions, which is the first cleavage occurring in the polyprotein. Also cleaves the host translation initiation factor EIF4G1, in order to shut down the capped cellular mRNA translation. Inhibits the host nucleus-cytoplasm protein and RNA trafficking by cleaving host members of the nuclear pores. Counteracts stress granule formation probably by antagonizing its assembly or promoting its dissassembly. Cleaves and inhibits host IFIH1/MDA5, thereby inhibiting the type-I IFN production and the establishment of the antiviral state. Cleaves and inhibits host MAVS, thereby inhibiting the type-I IFN production and the establishment of the antiviral state. In terms of biological role, plays an essential role in the virus replication cycle by acting as a viroporin. Creates a pore in the host endoplasmic reticulum and as a consequence releases Ca2+ in the cytoplasm of infected cell. In turn, high levels of cytoplasmic calcium may trigger membrane trafficking and transport of viral ER-associated proteins to viroplasms, sites of viral genome replication. Its function is as follows. Induces and associates with structural rearrangements of intracellular membranes. Displays RNA-binding, nucleotide binding and NTPase activities. May play a role in virion morphogenesis and viral RNA encapsidation by interacting with the capsid protein VP3. Localizes the viral replication complex to the surface of membranous vesicles. Together with protein 3CD binds the Cis-Active RNA Element (CRE) which is involved in RNA synthesis initiation. Acts as a cofactor to stimulate the activity of 3D polymerase, maybe through a nucleid acid chaperone activity. Functionally, localizes the viral replication complex to the surface of membranous vesicles. It inhibits host cell endoplasmic reticulum-to-Golgi apparatus transport and causes the disassembly of the Golgi complex, possibly through GBF1 interaction. This would result in depletion of MHC, trail receptors and IFN receptors at the host cell surface. Plays an essential role in viral RNA replication by recruiting ACBD3 and PI4KB at the viral replication sites, thereby allowing the formation of the rearranged membranous structures where viral replication takes place. In terms of biological role, acts as a primer for viral RNA replication and remains covalently bound to viral genomic RNA. VPg is uridylylated prior to priming replication into VPg-pUpU. The oriI viral genomic sequence may act as a template for this. The VPg-pUpU is then used as primer on the genomic RNA poly(A) by the RNA-dependent RNA polymerase to replicate the viral genome. During genome replication, the VPg-RNA linkage is removed by the host TDP2, thereby accelerating replication. During the late stage of the replication cycle, host TDP2 is excluded from sites of viral RNA synthesis and encapsidation, allowing for the generation of progeny virions. Its function is as follows. Involved in the viral replication complex and viral polypeptide maturation. It exhibits protease activity with a specificity and catalytic efficiency that is different from protease 3C. Protein 3CD lacks polymerase activity. Protein 3CD binds to the 5'UTR of the viral genome. Major viral protease that mediates proteolytic processing of the polyprotein. Cleaves host EIF5B, contributing to host translation shutoff. Also cleaves host PABPC1, contributing to host translation shutoff. Binds and inhibits host IFIH1/MDA5, thereby inhibiting the type-I IFN production and the establishment of the antiviral state. Cleaves host MAP3K7/TAK1, resulting in inhibition of TRAF6-triggered NF-kappa-B induction. Cleaves host NLRP1, triggers host N-glycine-mediated degradation of the autoinhibitory NLRP1 N-terminal fragment. Functionally, replicates the viral genomic RNA on the surface of intracellular membranes. May form linear arrays of subunits that propagate along a strong head-to-tail interaction called interface-I. Covalently attaches UMP to a tyrosine of VPg, which is used to prime RNA synthesis. The positive stranded RNA genome is first replicated at virus induced membranous vesicles, creating a dsRNA genomic replication form. This dsRNA is then used as template to synthesize positive stranded RNA genomes. ss(+)RNA genomes are either translated, replicated or encapsidated. In Homo sapiens (Human), this protein is Genome polyprotein.